A 190-amino-acid chain; its full sequence is Large ribosomal subunit protein uL5 (190 aa).

This sequence belongs to the universal ribosomal protein uL5 family. In terms of assembly, part of the 50S ribosomal subunit; part of the 5S rRNA/L5/L18/L25 subcomplex. Contacts the 5S rRNA and the P site tRNA. Forms a bridge to the 30S subunit in the 70S ribosome.

Its function is as follows. This is one of the proteins that bind and probably mediate the attachment of the 5S RNA into the large ribosomal subunit, where it forms part of the central protuberance. In the 70S ribosome it contacts protein S13 of the 30S subunit (bridge B1b), connecting the 2 subunits; this bridge is implicated in subunit movement. Contacts the P site tRNA; the 5S rRNA and some of its associated proteins might help stabilize positioning of ribosome-bound tRNAs. In Bifidobacterium longum (strain DJO10A), this protein is Large ribosomal subunit protein uL5.